A 155-amino-acid chain; its full sequence is DNA gyrase inhibitor (155 aa).

Belongs to the DNA gyrase inhibitor family. In terms of assembly, interacts with DNA gyrase.

The protein resides in the cytoplasm. In terms of biological role, inhibits the supercoiling activity of DNA gyrase. Acts by inhibiting DNA gyrase at an early step, prior to (or at the step of) binding of DNA by the gyrase. It protects cells against toxins that target DNA gyrase, by inhibiting activity of these toxins and reducing the formation of lethal double-strand breaks in the cell. In Salmonella typhi, this protein is DNA gyrase inhibitor.